The chain runs to 585 residues: Arginine--tRNA ligase (585 aa).

The 'HIGH' region motif lies at 131-141 (ANPTGPMHVGH).

This sequence belongs to the class-I aminoacyl-tRNA synthetase family. As to quaternary structure, monomer.

Its subcellular location is the cytoplasm. It carries out the reaction tRNA(Arg) + L-arginine + ATP = L-arginyl-tRNA(Arg) + AMP + diphosphate. The sequence is that of Arginine--tRNA ligase from Brucella canis (strain ATCC 23365 / NCTC 10854 / RM-666).